Here is a 113-residue protein sequence, read N- to C-terminus: Cell cycle protein GpsB (113 aa).

Positions 36–68 (LDMVIKDYSTFTQEIEALQAENIRLVQELDNAP) form a coiled coil.

Belongs to the GpsB family. In terms of assembly, forms polymers through the coiled coil domains. Interacts with PBP1, MreC and EzrA.

It localises to the cytoplasm. In terms of biological role, divisome component that associates with the complex late in its assembly, after the Z-ring is formed, and is dependent on DivIC and PBP2B for its recruitment to the divisome. Together with EzrA, is a key component of the system that regulates PBP1 localization during cell cycle progression. Its main role could be the removal of PBP1 from the cell pole after pole maturation is completed. Also contributes to the recruitment of PBP1 to the division complex. Not essential for septum formation. The protein is Cell cycle protein GpsB of Listeria monocytogenes serotype 4b (strain CLIP80459).